Consider the following 223-residue polypeptide: Agamous-like MADS-box protein AGL11 (223 aa).

Residues methionine 1–asparagine 61 enclose the MADS-box domain. Residues alanine 87–leucine 177 form the K-box domain.

It localises to the nucleus. Probable transcription factor involved in seed development. The polypeptide is Agamous-like MADS-box protein AGL11 (Vitis vinifera (Grape)).